A 1036-amino-acid chain; its full sequence is Ubiquitin carboxyl-terminal hydrolase 48 (1036 aa).

Positions 89-421 (VGLTNLGASC…NAYMLVYRLQ (333 aa)) constitute a USP domain. The active-site Nucleophile is C98. H353 (proton acceptor) is an active-site residue. 3 DUSP domains span residues 460–554 (QSVD…KALC), 569–692 (NQLN…YKEC), and 712–825 (MIAK…RIEV). A disordered region spans residues 611-644 (DEQDGEAEQSNGKINGSPFSKDESKEEKKEEEEE). Positions 618–628 (EQSNGKINGSP) are enriched in polar residues. Residues 881 to 924 (APELNVSSSETEEDKEEAKPDGEKDPDFNQSNGGTKRQKTSQQG) form a disordered region. 3 positions are modified to phosphoserine: S887, S888, and S889. The segment covering 896 to 907 (EEAKPDGEKDPD) has biased composition (basic and acidic residues). Polar residues predominate over residues 908-924 (FNQSNGGTKRQKTSQQG). The Ubiquitin-like domain maps to 930–1010 (KQVIRRSTRH…ILLKADEPIA (81 aa)). The residue at position 957 (K957) is an N6-acetyllysine.

The protein belongs to the peptidase C19 family. In terms of assembly, interacts with TRAF2 and RELA. Interacts with GPS1. In terms of tissue distribution, present in the brain, in particular in the postsynaptic density and the dendritic lipid raft fractions (at protein level).

The protein resides in the cytoplasm. Its subcellular location is the nucleus. It is found in the cell projection. The protein localises to the cilium. The catalysed reaction is Thiol-dependent hydrolysis of ester, thioester, amide, peptide and isopeptide bonds formed by the C-terminal Gly of ubiquitin (a 76-residue protein attached to proteins as an intracellular targeting signal).. Its function is as follows. Deubiquitinase that recognizes and hydrolyzes the peptide bond at the C-terminal Gly of ubiquitin. Involved in the processing of polyubiquitin precursors as well as that of ubiquitinated proteins. Plays a role in the regulation of NF-kappa-B activation by TNF receptor superfamily via its interactions with RELA and TRAF2. May also play a regulatory role at postsynaptic sites. Plays an important role in cell cycle progression by deubiquitinating Aurora B/AURKB and thereby extending its stability. In the context of H. pylori infection, stabilizes nuclear RELA through deubiquitination, thereby promoting the transcriptional activity of RELA to prolong TNFAIP3 de novo synthesis. Consequently, TNFAIP3 suppresses caspase activity and apoptotic cell death. Also functions in the modulation of the ciliary and synaptic transport as well as cytoskeleton organization, which are key for photoreceptor function and homeostasis. To achieve this, stabilizes the levels of the retinal degeneration-associated proteins ARL3 and UNC119 using distinct mechanisms. Plays a positive role in pyroptosis by stabilizing gasdermin E/GSDME through removal of its 'Lys-48'-linked ubiquitination. This Rattus norvegicus (Rat) protein is Ubiquitin carboxyl-terminal hydrolase 48 (Usp48).